Consider the following 555-residue polypeptide: Glutamate--tRNA ligase (555 aa).

The short motif at 100 to 110 (PNPSGPLHIGH) is the 'HIGH' region element.

Belongs to the class-I aminoacyl-tRNA synthetase family. Glutamate--tRNA ligase type 2 subfamily.

The protein localises to the cytoplasm. It catalyses the reaction tRNA(Glu) + L-glutamate + ATP = L-glutamyl-tRNA(Glu) + AMP + diphosphate. Catalyzes the attachment of glutamate to tRNA(Glu) in a two-step reaction: glutamate is first activated by ATP to form Glu-AMP and then transferred to the acceptor end of tRNA(Glu). This is Glutamate--tRNA ligase from Methanococcus maripaludis (strain C5 / ATCC BAA-1333).